The chain runs to 524 residues: 11-oxo-beta-amyrin 30-oxidase (524 aa).

A helical transmembrane segment spans residues 9 to 29 (GTTVIISVLSVLLAVIPWYLL). Cys472 contacts heme.

This sequence belongs to the cytochrome P450 family. It depends on heme as a cofactor. As to expression, expressed in flowers. Detected in roots upon salt treatment.

The protein localises to the membrane. The catalysed reaction is 11-oxo-beta-amyrin + 3 reduced [NADPH--hemoprotein reductase] + 3 O2 = glycyrrhetinate + 3 oxidized [NADPH--hemoprotein reductase] + 4 H2O + 4 H(+). In terms of biological role, involved in the biosynthesis of triterpenoid saponins. Catalyzes three sequential oxidation steps at C-30 of 11-oxo-beta-amyrin. Also able to catalyze sequential C-30 hydroxylation of beta-amyrin to produce 30-hydroxy-beta-amyrin and 11-deoxoglycyrrhetinic acid. This is 11-oxo-beta-amyrin 30-oxidase (CYP72A63) from Medicago truncatula (Barrel medic).